A 458-amino-acid chain; its full sequence is MIQRDPNLLLSWRADQHPDAPMHNDQRYMTGFGNEFATEAVAGSLPIGQNSPQRVAHGLYAEQLSGTAFTAPRGQNRRSWLYRIRPAAVHGSFSLVEQSHFHNDFGAGPVPPDQLRWSPLPLPSVPTDFVDGLYTMAGNGGPEAMSGVGVHVYAANASMQDRFFYDADGELLLVPQQGRLRVHTELGVLALEPQQIGVIPRGMRFRVELLDAAARGYVCENFGGLLRLPDLGPIGANGLANPRDFETPHAAFEQREGTFELVAKFQGHLWRADIGHSPLDVVAWHGNYAPYRYDLRRFNTIGSISFDHPDPSIFTVLTSPSDTHGTANMDFAIFPPRWLVAQHTFRPPWFHRNVASEFMGLVHGVYDAKAEGFAPGGASLHNCMSGHGPDAATFDKASQADLTRPDVIADTMAFMFETRAVLRPTQQALSAAHRQADYQQCWSGLRAAFQPPITEDAT.

His308 serves as the catalytic Proton acceptor. Fe cation is bound by residues His351 and Glu357. Homogentisate-binding residues include Tyr366 and His387. Fe cation is bound at residue His387.

Belongs to the homogentisate dioxygenase family. As to quaternary structure, hexamer; dimer of trimers. It depends on Fe cation as a cofactor.

The catalysed reaction is homogentisate + O2 = 4-maleylacetoacetate + H(+). Its pathway is amino-acid degradation; L-phenylalanine degradation; acetoacetate and fumarate from L-phenylalanine: step 4/6. Involved in the catabolism of homogentisate (2,5-dihydroxyphenylacetate or 2,5-OH-PhAc), a central intermediate in the degradation of phenylalanine and tyrosine. Catalyzes the oxidative ring cleavage of the aromatic ring of homogentisate to yield maleylacetoacetate. The polypeptide is Homogentisate 1,2-dioxygenase (Xanthomonas axonopodis pv. citri (strain 306)).